Reading from the N-terminus, the 67-residue chain is Large ribosomal subunit protein bL35 (67 aa).

Belongs to the bacterial ribosomal protein bL35 family.

The polypeptide is Large ribosomal subunit protein bL35 (Dehalococcoides mccartyi (strain ATCC BAA-2266 / KCTC 15142 / 195) (Dehalococcoides ethenogenes (strain 195))).